Reading from the N-terminus, the 281-residue chain is Shikimate dehydrogenase (NADP(+)) (281 aa).

Shikimate contacts are provided by residues 19 to 21 (SFS) and Thr66. The active-site Proton acceptor is the Lys70. Shikimate is bound by residues Asn91 and Asp104. NADP(+) contacts are provided by residues 127-131 (GAGGA) and Ile223. Tyr225 is a binding site for shikimate. Gly246 contributes to the NADP(+) binding site.

Belongs to the shikimate dehydrogenase family. Homodimer.

It carries out the reaction shikimate + NADP(+) = 3-dehydroshikimate + NADPH + H(+). It functions in the pathway metabolic intermediate biosynthesis; chorismate biosynthesis; chorismate from D-erythrose 4-phosphate and phosphoenolpyruvate: step 4/7. Its function is as follows. Involved in the biosynthesis of the chorismate, which leads to the biosynthesis of aromatic amino acids. Catalyzes the reversible NADPH linked reduction of 3-dehydroshikimate (DHSA) to yield shikimate (SA). This chain is Shikimate dehydrogenase (NADP(+)), found in Methanobrevibacter smithii (strain ATCC 35061 / DSM 861 / OCM 144 / PS).